Here is a 372-residue protein sequence, read N- to C-terminus: Alanine dehydrogenase 2 (372 aa).

His95 is a catalytic residue. NAD(+) is bound at residue 169–199; it reads KVTIIGGGQAGTNAAKIALGLGADVTILDVN.

The protein belongs to the AlaDH/PNT family.

The enzyme catalyses L-alanine + NAD(+) + H2O = pyruvate + NH4(+) + NADH + H(+). The protein operates within amino-acid degradation; L-alanine degradation via dehydrogenase pathway; NH(3) and pyruvate from L-alanine: step 1/1. Its function is as follows. May play a role in cell wall synthesis as L-alanine is an important constituent of the peptidoglycan layer. This Staphylococcus aureus (strain N315) protein is Alanine dehydrogenase 2 (ald2).